A 502-amino-acid polypeptide reads, in one-letter code: Cytochrome P450 monooxygenase pyr9 (502 aa).

The chain crosses the membrane as a helical span at residues 5 to 25; that stretch reads EDASIGTVWVTCLLAVGLYFI. Asn-205, Asn-291, and Asn-372 each carry an N-linked (GlcNAc...) asparagine glycan. Cys-437 is a binding site for heme.

Belongs to the cytochrome P450 family. It depends on heme as a cofactor.

The protein resides in the membrane. Its pathway is secondary metabolite biosynthesis; terpenoid biosynthesis. Cytochrome P450 monooxygenase; part of the gene cluster that mediates the biosynthesis of pyripyropene A, a specific human acyl-coenzyme A:cholesterol acyltransferase 2 inhibitor. The first step of the pathway is the synthesis of nicotinyl-CoA from nicotinic acid by the nicotinic acid-CoA ligase pyr1. Nicotinyl-CoA is then a substrate of polyketide synthase pyr2 to produce 4-hydroxy-6-(3-pyridinyl)-2H-pyran-2-one (HPPO) which is further prenylated by the polyprenyl transferase pyr6 to yield farnesyl-HPPO. The next steps consist of an epoxidation of farnesyl-HPPO to epoxyfarnesyl-HPPO by FAD-dependent monooxygenase pyr5 and a cyclization of the terpenoid portion by the terpene cyclase pyr4 to yield deacetyl-pyripyropene E. The 2 cytochrome P450 monooxygenases pyr3 and pyr9, and the 2 acetyltransferases pyr7 and pyr8 are involved in the conversion of deacetyl-pyripyropene E into pyripyropene A through several cycles of oxidation and acetylation steps. Pyr7 acetylates deacetyl-pyripyropene E to pyripyropene E which is oxidized to 11-deacetyl-pyripyropene O by pyr3, which is in turn acetylated into pyripyropene O by pyr8. Pyripyropene O is then oxidized to deacetyl-pyripyropene A by pyr9. Deacetyl-pyripyropene A is finally acetylated to pyripyropene A by pyr8. In Aspergillus fumigatus (strain ATCC MYA-4609 / CBS 101355 / FGSC A1100 / Af293) (Neosartorya fumigata), this protein is Cytochrome P450 monooxygenase pyr9.